Reading from the N-terminus, the 222-residue chain is Large ribosomal subunit protein mL64 (222 aa).

2 disordered regions span residues 14–40 (LTAT…PWWP) and 188–222 (KRLK…APSS). Residues 144-213 (EKAQADKERR…AALAAAAAQD (70 aa)) adopt a coiled-coil conformation. Residues 184–200 (KKERKRLKEEKQRQKQE) carry the Nuclear localization signal motif. Residues 188–201 (KRLKEEKQRQKQEA) are compositionally biased toward basic and acidic residues. The segment covering 202 to 216 (RAAALAAAAAQDPAA) has biased composition (low complexity).

Belongs to the mitochondrion-specific ribosomal protein mL64 family. In terms of assembly, component of the mitochondrial ribosome large subunit (39S) which comprises a 16S rRNA and about 50 distinct proteins. Interacts with GADD45A, GADD45B and GADD45G. Interacts with NR4A1 via the NR4A1 AB domain. Interacts with ATAD3A and ATAD3B.

The protein resides in the mitochondrion. The protein localises to the nucleus. Its function is as follows. Acts as a negative regulator of G1 to S cell cycle phase progression by inhibiting cyclin-dependent kinases. Inhibitory effects are additive with GADD45 proteins but also occur in the absence of GADD45 proteins. Acts as a repressor of the orphan nuclear receptor NR4A1 by inhibiting AB domain-mediated transcriptional activity. May be involved in the hormone-mediated regulation of NR4A1 transcriptional activity. May play a role in mitochondrial protein synthesis. This is Large ribosomal subunit protein mL64 (GADD45GIP1) from Chlorocebus aethiops (Green monkey).